The chain runs to 930 residues: Translation initiation factor IF-2 (930 aa).

Disordered stretches follow at residues 160-179 (EPVEAAVDTSAPTRFSFTDG) and 208-301 (AKRA…AAAP). Positions 208–227 (AKRAAEEAKRTQPRAEKPAD) are enriched in basic and acidic residues. Basic residues-rich tracts occupy residues 263 to 272 (GHGHKKHHHG) and 288 to 301 (KRGAGKAVKKAAAP). The tr-type G domain maps to 431-600 (TRAPVVTVMG…SLQAEVLELT (170 aa)). Residues 440–447 (GHVDHGKT) are G1. Residue 440–447 (GHVDHGKT) participates in GTP binding. The interval 465-469 (GITQH) is G2. Positions 486–489 (DTPG) are G3. Residues 486-490 (DTPGH) and 540-543 (NKCD) each bind GTP. The interval 540-543 (NKCD) is G4. The tract at residues 576-578 (SAH) is G5.

The protein belongs to the TRAFAC class translation factor GTPase superfamily. Classic translation factor GTPase family. IF-2 subfamily.

The protein localises to the cytoplasm. Functionally, one of the essential components for the initiation of protein synthesis. Protects formylmethionyl-tRNA from spontaneous hydrolysis and promotes its binding to the 30S ribosomal subunits. Also involved in the hydrolysis of GTP during the formation of the 70S ribosomal complex. The protein is Translation initiation factor IF-2 of Cellvibrio japonicus (strain Ueda107) (Pseudomonas fluorescens subsp. cellulosa).